A 145-amino-acid polypeptide reads, in one-letter code: D-aminoacyl-tRNA deacylase (145 aa).

The Gly-cisPro motif, important for rejection of L-amino acids motif lies at 137-138; the sequence is GP.

Belongs to the DTD family. In terms of assembly, homodimer.

Its subcellular location is the cytoplasm. The catalysed reaction is glycyl-tRNA(Ala) + H2O = tRNA(Ala) + glycine + H(+). It catalyses the reaction a D-aminoacyl-tRNA + H2O = a tRNA + a D-alpha-amino acid + H(+). An aminoacyl-tRNA editing enzyme that deacylates mischarged D-aminoacyl-tRNAs. Also deacylates mischarged glycyl-tRNA(Ala), protecting cells against glycine mischarging by AlaRS. Acts via tRNA-based rather than protein-based catalysis; rejects L-amino acids rather than detecting D-amino acids in the active site. By recycling D-aminoacyl-tRNA to D-amino acids and free tRNA molecules, this enzyme counteracts the toxicity associated with the formation of D-aminoacyl-tRNA entities in vivo and helps enforce protein L-homochirality. The chain is D-aminoacyl-tRNA deacylase from Pseudomonas putida (strain ATCC 47054 / DSM 6125 / CFBP 8728 / NCIMB 11950 / KT2440).